Consider the following 255-residue polypeptide: Thiazole synthase (255 aa).

Lysine 96 functions as the Schiff-base intermediate with DXP in the catalytic mechanism. 1-deoxy-D-xylulose 5-phosphate is bound by residues glycine 157, 184–185 (AG), and 206–207 (NT).

It belongs to the ThiG family. In terms of assembly, homotetramer. Forms heterodimers with either ThiH or ThiS.

The protein resides in the cytoplasm. The enzyme catalyses [ThiS sulfur-carrier protein]-C-terminal-Gly-aminoethanethioate + 2-iminoacetate + 1-deoxy-D-xylulose 5-phosphate = [ThiS sulfur-carrier protein]-C-terminal Gly-Gly + 2-[(2R,5Z)-2-carboxy-4-methylthiazol-5(2H)-ylidene]ethyl phosphate + 2 H2O + H(+). Its pathway is cofactor biosynthesis; thiamine diphosphate biosynthesis. In terms of biological role, catalyzes the rearrangement of 1-deoxy-D-xylulose 5-phosphate (DXP) to produce the thiazole phosphate moiety of thiamine. Sulfur is provided by the thiocarboxylate moiety of the carrier protein ThiS. In vitro, sulfur can be provided by H(2)S. This is Thiazole synthase from Clostridium acetobutylicum (strain ATCC 824 / DSM 792 / JCM 1419 / IAM 19013 / LMG 5710 / NBRC 13948 / NRRL B-527 / VKM B-1787 / 2291 / W).